We begin with the raw amino-acid sequence, 140 residues long: L-fucose mutarotase (140 aa).

H22 serves as the catalytic Proton donor. Residues D30, R107, and 129–131 contribute to the substrate site; that span reads YGN.

Belongs to the RbsD / FucU family. FucU mutarotase subfamily. As to quaternary structure, homodecamer.

The protein resides in the cytoplasm. The enzyme catalyses alpha-L-fucose = beta-L-fucose. The protein operates within carbohydrate metabolism; L-fucose metabolism. Involved in the anomeric conversion of L-fucose. This chain is L-fucose mutarotase, found in Klebsiella pneumoniae subsp. pneumoniae (strain ATCC 700721 / MGH 78578).